A 975-amino-acid polypeptide reads, in one-letter code: Kinesin-like protein KIN-14K (975 aa).

The disordered stretch occupies residues 1 to 40 (MKNRIKKGSSMIGVYGRSDGSSSIQSSNGSESRESIDDNK). The segment covering 17–30 (RSDGSSSIQSSNGS) has biased composition (low complexity). The segment covering 31-40 (ESRESIDDNK) has biased composition (basic and acidic residues). Residues 40-143 (KQGHQSLVEW…SLKALKASFS (104 aa)) form the Calponin-homology (CH) domain. A coiled-coil region spans residues 289 to 345 (KERSNAELSKLKQELEIVKETHEKQFLELKLNAQKAKVELERQVKNSELRVVEAKEL). Residues 436–746 (NIRVYCRIRP…LKFAERVSGV (311 aa)) enclose the Kinesin motor domain. ATP is bound at residue 520–527 (GQTGSGKT). A coiled-coil region spans residues 757–788 (GRDVRQLMEQVSNLKDMIAKKDEELQKFQNIN). Disordered stretches follow at residues 801 to 852 (VSPP…GAKD) and 900 to 975 (LFPE…NRKR). Over residues 944 to 958 (LSISTTSSKALTSSK) the composition is skewed to low complexity.

This sequence belongs to the TRAFAC class myosin-kinesin ATPase superfamily. Kinesin family. KIN-14 subfamily.

The protein is Kinesin-like protein KIN-14K of Arabidopsis thaliana (Mouse-ear cress).